We begin with the raw amino-acid sequence, 51 residues long: DNA-binding protein (51 aa).

The segment at 1 to 51 (MVYRRRRSRSADGTYTRRRRSSGYRRRPGRPRTYRRSRSATRRSGYRRRRY) is disordered. Repeat copies occupy residues 5–10 (RRRSRS) and 17–22 (RRRRSS). The 2 X 6 AA repeats of R-R-R-R-S-S stretch occupies residues 5 to 22 (RRRSRSADGTYTRRRRSS). Basic residues predominate over residues 16-51 (TRRRRSSGYRRRPGRPRTYRRSRSATRRSGYRRRRY).

Post-translationally, probably phosphorylated in infected cells.

The protein resides in the virion. In terms of biological role, thought to be responsible for DNA condensation during packaging of the nucleocapsids. In Orgyia pseudotsugata (Douglas-fir tussock moth), this protein is DNA-binding protein (P6.5).